The chain runs to 298 residues: UDP-N-acetylenolpyruvoylglucosamine reductase (298 aa).

The region spanning 27–191 (TGGNADVFVM…LDATFSLELE (165 aa)) is the FAD-binding PCMH-type domain. Arginine 170 is an active-site residue. The active-site Proton donor is serine 220. Residue glutamate 290 is part of the active site.

This sequence belongs to the MurB family. It depends on FAD as a cofactor.

The protein localises to the cytoplasm. The enzyme catalyses UDP-N-acetyl-alpha-D-muramate + NADP(+) = UDP-N-acetyl-3-O-(1-carboxyvinyl)-alpha-D-glucosamine + NADPH + H(+). Its pathway is cell wall biogenesis; peptidoglycan biosynthesis. Functionally, cell wall formation. In Listeria innocua serovar 6a (strain ATCC BAA-680 / CLIP 11262), this protein is UDP-N-acetylenolpyruvoylglucosamine reductase.